The chain runs to 275 residues: 4-hydroxy-3-methylbut-2-enyl diphosphate reductase (275 aa).

Position 12 (Cys12) interacts with [4Fe-4S] cluster. Residues His36 and His70 each contribute to the (2E)-4-hydroxy-3-methylbut-2-enyl diphosphate site. Residues His36 and His70 each coordinate dimethylallyl diphosphate. His36 and His70 together coordinate isopentenyl diphosphate. Cys92 serves as a coordination point for [4Fe-4S] cluster. His120 contacts (2E)-4-hydroxy-3-methylbut-2-enyl diphosphate. His120 serves as a coordination point for dimethylallyl diphosphate. His120 lines the isopentenyl diphosphate pocket. Residue Glu122 is the Proton donor of the active site. Residue Thr158 participates in (2E)-4-hydroxy-3-methylbut-2-enyl diphosphate binding. [4Fe-4S] cluster is bound at residue Cys186. Ser214, Ser215, Asn216, and Ser258 together coordinate (2E)-4-hydroxy-3-methylbut-2-enyl diphosphate. Residues Ser214, Ser215, Asn216, and Ser258 each contribute to the dimethylallyl diphosphate site. Isopentenyl diphosphate contacts are provided by Ser214, Ser215, Asn216, and Ser258.

It belongs to the IspH family. The cofactor is [4Fe-4S] cluster.

The enzyme catalyses isopentenyl diphosphate + 2 oxidized [2Fe-2S]-[ferredoxin] + H2O = (2E)-4-hydroxy-3-methylbut-2-enyl diphosphate + 2 reduced [2Fe-2S]-[ferredoxin] + 2 H(+). The catalysed reaction is dimethylallyl diphosphate + 2 oxidized [2Fe-2S]-[ferredoxin] + H2O = (2E)-4-hydroxy-3-methylbut-2-enyl diphosphate + 2 reduced [2Fe-2S]-[ferredoxin] + 2 H(+). It functions in the pathway isoprenoid biosynthesis; dimethylallyl diphosphate biosynthesis; dimethylallyl diphosphate from (2E)-4-hydroxy-3-methylbutenyl diphosphate: step 1/1. Its pathway is isoprenoid biosynthesis; isopentenyl diphosphate biosynthesis via DXP pathway; isopentenyl diphosphate from 1-deoxy-D-xylulose 5-phosphate: step 6/6. In terms of biological role, catalyzes the conversion of 1-hydroxy-2-methyl-2-(E)-butenyl 4-diphosphate (HMBPP) into a mixture of isopentenyl diphosphate (IPP) and dimethylallyl diphosphate (DMAPP). Acts in the terminal step of the DOXP/MEP pathway for isoprenoid precursor biosynthesis. This is 4-hydroxy-3-methylbut-2-enyl diphosphate reductase from Campylobacter hominis (strain ATCC BAA-381 / DSM 21671 / CCUG 45161 / LMG 19568 / NCTC 13146 / CH001A).